The following is a 445-amino-acid chain: Tryptamine benzoyltransferase 1 (445 aa).

Catalysis depends on proton acceptor residues His-150 and Asp-382.

It belongs to the plant acyltransferase family.

In terms of biological role, hydroxycinnamoyl transferase that catalyzes the transfer of an acyl from benzoyl-CoA to tryptamine, to produce benzoyl tryptamine. Serotonin and tyramine serve as acyl acceptors in vitro. Can use p-coumaroyl-CoA, and to a lesser extent caffeoyl-CoA, as acyl donors. This chain is Tryptamine benzoyltransferase 1, found in Oryza sativa subsp. japonica (Rice).